We begin with the raw amino-acid sequence, 249 residues long: DNA polymerase sliding clamp 1 (249 aa).

Belongs to the PCNA family. Homotrimer. The subunits circularize to form a toroid; DNA passes through its center. Replication factor C (RFC) is required to load the toroid on the DNA.

Functionally, sliding clamp subunit that acts as a moving platform for DNA processing. Responsible for tethering the catalytic subunit of DNA polymerase and other proteins to DNA during high-speed replication. This chain is DNA polymerase sliding clamp 1, found in Pyrobaculum aerophilum (strain ATCC 51768 / DSM 7523 / JCM 9630 / CIP 104966 / NBRC 100827 / IM2).